We begin with the raw amino-acid sequence, 275 residues long: Probable aquaporin NIP7-1 (275 aa).

The span at methionine 1 to aspartate 11 shows a compositional bias: basic and acidic residues. Residues methionine 1–histidine 26 form a disordered region. The next 2 membrane-spanning stretches (helical) occupy residues isoleucine 47–serine 67 and valine 76–isoleucine 96. An NPA 1 motif is present at residues asparagine 105–serine 107. 3 helical membrane-spanning segments follow: residues isoleucine 127–valine 147, valine 161–leucine 181, and leucine 192–serine 212. The short motif at asparagine 217–alanine 219 is the NPA 2 element. A helical membrane pass occupies residues phenylalanine 231 to threonine 251. Residue serine 272 is modified to Phosphoserine.

This sequence belongs to the MIP/aquaporin (TC 1.A.8) family. NIP (TC 1.A.8.12) subfamily. Expressed in floral buds.

It is found in the membrane. Aquaporins facilitate the transport of water and small neutral solutes across cell membranes. In Arabidopsis thaliana (Mouse-ear cress), this protein is Probable aquaporin NIP7-1 (NIP7-1).